A 100-amino-acid polypeptide reads, in one-letter code: Small ribosomal subunit protein bS20 (100 aa).

The segment at 79 to 100 (AAHQKSRLSAAVKQAIEPAPST) is disordered.

It belongs to the bacterial ribosomal protein bS20 family.

In terms of biological role, binds directly to 16S ribosomal RNA. This Prochlorococcus marinus (strain MIT 9303) protein is Small ribosomal subunit protein bS20.